The primary structure comprises 312 residues: Very-long-chain 3-oxoacyl-CoA reductase (312 aa).

The chain crosses the membrane as a helical span at residues 4-24 (ALPAAGFLYWVGASTVAYLAL). 50–79 (GEWAVVTGGTDGIGKSYAEELAKRGMKIVL) provides a ligand contact to NADP(+). 2 helical membrane passes run 182 to 202 (GAIL…LTIY) and 271 to 291 (GYPI…WLYF). Residue Ser189 coordinates substrate. Tyr202 acts as the Proton acceptor in catalysis. Residues 308–312 (KMKMN) carry the Di-lysine motif motif.

Belongs to the short-chain dehydrogenases/reductases (SDR) family. 17-beta-HSD 3 subfamily.

Its subcellular location is the endoplasmic reticulum membrane. The catalysed reaction is a very-long-chain (3R)-3-hydroxyacyl-CoA + NADP(+) = a very-long-chain 3-oxoacyl-CoA + NADPH + H(+). It carries out the reaction 17beta-estradiol + NAD(+) = estrone + NADH + H(+). It catalyses the reaction 17beta-estradiol + NADP(+) = estrone + NADPH + H(+). The enzyme catalyses 3-oxooctadecanoyl-CoA + NADPH + H(+) = (3R)-hydroxyoctadecanoyl-CoA + NADP(+). The catalysed reaction is (7Z,10Z,13Z,16Z)-3-oxodocosatetraenoyl-CoA + NADPH + H(+) = (3R)-hydroxy-(7Z,10Z,13Z,16Z)-docosatetraenoyl-CoA + NADP(+). It carries out the reaction 3-oxo-(7Z,10Z,13Z,16Z,19Z)-docosapentaenoyl-CoA + NADPH + H(+) = (3R)-hydroxy-(7Z,10Z,13Z,16Z,19Z)-docosapentaenoyl-CoA + NADP(+). It catalyses the reaction (8Z,11Z,14Z)-3-oxoeicosatrienoyl-CoA + NADPH + H(+) = (3R)-hydroxy-(8Z,11Z,14Z)-eicosatrienoyl-CoA + NADP(+). It participates in lipid metabolism; fatty acid biosynthesis. It functions in the pathway steroid biosynthesis; estrogen biosynthesis. Catalyzes the second of the four reactions of the long-chain fatty acids elongation cycle. This endoplasmic reticulum-bound enzymatic process, allows the addition of two carbons to the chain of long- and very long-chain fatty acids/VLCFAs per cycle. This enzyme has a 3-ketoacyl-CoA reductase activity, reducing 3-ketoacyl-CoA to 3-hydroxyacyl-CoA, within each cycle of fatty acid elongation. Thereby, it may participate in the production of VLCFAs of different chain lengths that are involved in multiple biological processes as precursors of membrane lipids and lipid mediators. May also catalyze the transformation of estrone (E1) into estradiol (E2) and play a role in estrogen formation. The sequence is that of Very-long-chain 3-oxoacyl-CoA reductase (HSD17B12) from Bos taurus (Bovine).